Here is a 485-residue protein sequence, read N- to C-terminus: Cysteine--tRNA ligase (485 aa).

A Zn(2+)-binding site is contributed by Cys27. The 'HIGH' region motif lies at Ile29–His39. Zn(2+) contacts are provided by Cys208, His233, and Glu237. The short motif at Lys265 to Ser269 is the 'KMSKS' region element. Lys268 is a binding site for ATP.

The protein belongs to the class-I aminoacyl-tRNA synthetase family. As to quaternary structure, monomer. Zn(2+) serves as cofactor.

It localises to the cytoplasm. It catalyses the reaction tRNA(Cys) + L-cysteine + ATP = L-cysteinyl-tRNA(Cys) + AMP + diphosphate. The protein is Cysteine--tRNA ligase of Solidesulfovibrio magneticus (strain ATCC 700980 / DSM 13731 / RS-1) (Desulfovibrio magneticus).